A 434-amino-acid polypeptide reads, in one-letter code: UDP-N-acetylglucosamine 1-carboxyvinyltransferase 1 (434 aa).

Residue 22 to 23 (KN) coordinates phosphoenolpyruvate. Arg93 lines the UDP-N-acetyl-alpha-D-glucosamine pocket. The active-site Proton donor is the Cys117. Cys117 carries the 2-(S-cysteinyl)pyruvic acid O-phosphothioketal modification. UDP-N-acetyl-alpha-D-glucosamine-binding positions include 122–126 (RPIDQ), Asp306, and Val328.

Belongs to the EPSP synthase family. MurA subfamily.

It localises to the cytoplasm. The enzyme catalyses phosphoenolpyruvate + UDP-N-acetyl-alpha-D-glucosamine = UDP-N-acetyl-3-O-(1-carboxyvinyl)-alpha-D-glucosamine + phosphate. Its pathway is cell wall biogenesis; peptidoglycan biosynthesis. Its function is as follows. Cell wall formation. Adds enolpyruvyl to UDP-N-acetylglucosamine. The sequence is that of UDP-N-acetylglucosamine 1-carboxyvinyltransferase 1 from Bacillus cereus (strain ATCC 14579 / DSM 31 / CCUG 7414 / JCM 2152 / NBRC 15305 / NCIMB 9373 / NCTC 2599 / NRRL B-3711).